Here is a 139-residue protein sequence, read N- to C-terminus: Thiosulfate:glutathione sulfurtransferase (139 aa).

The residue at position 26 (Ser-26) is a Phosphoserine. The 102-residue stretch at 37-138 (HDPNVVLVDV…WVSHGGDKLD (102 aa)) folds into the Rhodanese domain. Residue Cys-98 is the Cysteine persulfide intermediate of the active site.

The protein resides in the mitochondrion. It carries out the reaction thiosulfate + glutathione = S-sulfanylglutathione + sulfite + H(+). GSS(-) is a potent inhibitor of RDL1, since the presence of the sulfur dioxygenase strongly increases the RDL1 catalytic activity. Functionally, thiosulfate:glutathione sulfurtransferase (TST) required to produce S-sulfanylglutathione (GSS(-)), a central intermediate in hydrogen sulfide metabolism. Provides the link between the first step in H(2)S metabolism performed by the sulfide:quinone oxidoreductase (SQOR) which catalyzes the conversion of H(2)S to thiosulfate, and the sulfur dioxygenase (SDO) which uses GSS(-) as substrate. The thermodynamic coupling of the irreversible SDO and reversible TST reactions provides a model for the physiologically relevant reaction with thiosulfate as the sulfane donor. The sequence is that of Thiosulfate:glutathione sulfurtransferase (RDL1) from Saccharomyces cerevisiae (strain ATCC 204508 / S288c) (Baker's yeast).